The chain runs to 236 residues: MRILVINPNSSSALTESVADAAQQVVATGTIISAINPSRGPAVIEGSFDEALATFHLIEEVERAERENPPDAYVIACFGDPGLDAVKELTDRPVVGVAEAAIHMSSFVAATFSIVSILPRVRKHLHELVRQAGATNRLASIKLPNLGVMAFHEDEHAALETLKQAAKEAVQEDGAESIVLGCAGMVGFARQLSDELGVPVIDPVEAACRVAESLVALGYQTSKANSYQKPTEKQYL.

In terms of assembly, homohexamer, homoheptamer or homooctamer.

It catalyses the reaction a D-5-monosubstituted hydantoin = a L-5-monosubstituted hydantoin. It carries out the reaction D-5-benzylhydantoin = L-5-benzylhydantoin. With respect to regulation, completely inhibited by HgCl(2) and iodoacetamide. Stimulated by dithiothreitol. Involved in the asymmetric conversion of racemic 5-substituted hydantoins to the corresponding L-amino acids. Catalyzes the racemization via enolization of D- and L-5-monosubstituted hydantoins. It shows preference for hydantoins with arylalkyl side chains such as 5-benzylhydantoin (BH) and, to a lesser extent, 5-(3-indolylmethylene)hydantoin (IMH). The chain is Hydantoin racemase from Paenarthrobacter aurescens (Arthrobacter aurescens).